The following is a 545-amino-acid chain: CTP synthase (545 aa).

Residues 1-265 (MTKYIFITGG…DEIVVKKLSL (265 aa)) are amidoligase domain. Residue serine 13 coordinates CTP. Serine 13 serves as a coordination point for UTP. ATP is bound by residues 14–19 (SLGKGI) and aspartate 71. Mg(2+) contacts are provided by aspartate 71 and glutamate 139. CTP-binding positions include 146–148 (DIE), 186–191 (KTKPTQ), and lysine 222. UTP is bound by residues 186 to 191 (KTKPTQ) and lysine 222. The region spanning 290–541 (KIAMVGKYTE…VLAARIHHQE (252 aa)) is the Glutamine amidotransferase type-1 domain. Glycine 351 serves as a coordination point for L-glutamine. Cysteine 378 serves as the catalytic Nucleophile; for glutamine hydrolysis. Residues 379–382 (LGMQ), glutamate 402, and arginine 469 contribute to the L-glutamine site. Active-site residues include histidine 514 and glutamate 516.

This sequence belongs to the CTP synthase family. As to quaternary structure, homotetramer.

The enzyme catalyses UTP + L-glutamine + ATP + H2O = CTP + L-glutamate + ADP + phosphate + 2 H(+). It carries out the reaction L-glutamine + H2O = L-glutamate + NH4(+). The catalysed reaction is UTP + NH4(+) + ATP = CTP + ADP + phosphate + 2 H(+). The protein operates within pyrimidine metabolism; CTP biosynthesis via de novo pathway; CTP from UDP: step 2/2. Its activity is regulated as follows. Allosterically activated by GTP, when glutamine is the substrate; GTP has no effect on the reaction when ammonia is the substrate. The allosteric effector GTP functions by stabilizing the protein conformation that binds the tetrahedral intermediate(s) formed during glutamine hydrolysis. Inhibited by the product CTP, via allosteric rather than competitive inhibition. Its function is as follows. Catalyzes the ATP-dependent amination of UTP to CTP with either L-glutamine or ammonia as the source of nitrogen. Regulates intracellular CTP levels through interactions with the four ribonucleotide triphosphates. The chain is CTP synthase from Legionella pneumophila (strain Corby).